The sequence spans 248 residues: Probable transcriptional regulatory protein Pcar_2335 (248 aa).

This sequence belongs to the TACO1 family.

The protein resides in the cytoplasm. This chain is Probable transcriptional regulatory protein Pcar_2335, found in Syntrophotalea carbinolica (strain DSM 2380 / NBRC 103641 / GraBd1) (Pelobacter carbinolicus).